A 293-amino-acid polypeptide reads, in one-letter code: Cytochrome c biogenesis protein CcsA (293 aa).

8 helical membrane-spanning segments follow: residues 12-32 (INIL…AKLT), 39-59 (VFSL…GMLL), 78-98 (LFLS…LSII), 99-119 (GAIG…ILPP), 142-162 (VMIF…IYVI), 216-236 (FISL…VWAN), 250-267 (TWAL…HIRI), and 273-293 (KIYA…VTWE).

This sequence belongs to the CcmF/CycK/Ccl1/NrfE/CcsA family. May interact with Ccs1.

The protein localises to the plastid. It is found in the chloroplast thylakoid membrane. In terms of biological role, required during biogenesis of c-type cytochromes (cytochrome c6 and cytochrome f) at the step of heme attachment. The chain is Cytochrome c biogenesis protein CcsA from Cyanidium caldarium (Red alga).